A 480-amino-acid polypeptide reads, in one-letter code: uncharacterized protein (480 aa).

The helical transmembrane segment at 7-28 threads the bilayer; it reads HVISIFETFGAYFINIFYNFLY. Asn73 and Asn195 each carry an N-linked (GlcNAc...) asparagine; by host glycan. Residues 195-235 adopt a coiled-coil conformation; it reads NRSLLYQIEELTSEKKSLLAELSTLRKKYEKRQSEYRRLVQ. The interval 297 to 332 is disordered; sequence ELTSKSPSNYPVPQSRTIVSKPSDNYPVPQSRSSKI. Residues 301–329 are compositionally biased toward polar residues; that stretch reads KSPSNYPVPQSRTIVSKPSDNYPVPQSRS. Asn455 is a glycosylation site (N-linked (GlcNAc...) asparagine; by host).

It belongs to the asfivirus B475L family.

The protein resides in the host membrane. This is an uncharacterized protein from African swine fever virus (isolate Pig/Kenya/KEN-50/1950) (ASFV).